Here is a 555-residue protein sequence, read N- to C-terminus: B3 domain-containing protein REM10 (555 aa).

4 DNA-binding regions (TF-B3) span residues Asn11–Ser103, Cys150–Thr247, Ser276–Asn372, and Ser460–Lys554.

It localises to the nucleus. This Arabidopsis thaliana (Mouse-ear cress) protein is B3 domain-containing protein REM10 (REM10).